Reading from the N-terminus, the 444-residue chain is Nuclear envelope integral membrane protein 1 (444 aa).

A signal peptide spans 1–43 (MAGGMKVAVSPAVGPGPWGSGVGGGGTVRLLLILSGCLVYGTA). N-linked (GlcNAc...) asparagine glycosylation is present at asparagine 125. 5 consecutive transmembrane segments (helical) span residues 161-181 (PKLF…DLLS), 186-206 (FYYS…IIFI), 216-236 (PIYV…QLVF), 245-265 (CYWQ…FAVC), and 289-309 (LCFM…IIIA). Residues 186–297 (FYYSTGMTVG…GLCFMYSGIQ (112 aa)) form an a; required for its colocalization with lamins at the nuclear envelope region. The tract at residues 336-405 (PVPPRLLTEE…LTPNEVSVHE (70 aa)) is b; required for interaction with RAN-GTP. The required for nuclear localization stretch occupies residues 336-444 (PVPPRLLTEE…PAITQNNFLT (109 aa)). Residues serine 368, serine 424, and serine 425 each carry the phosphoserine modification.

It belongs to the NEMP family. Homooligomer. Interacts with RAN-GTP. Interacts with EMD. Phosphorylation may regulate its interaction with RAN-GTP.

The protein resides in the nucleus inner membrane. It localises to the nucleus envelope. In terms of biological role, together with EMD, contributes to nuclear envelope stiffness in germ cells. Required for female fertility. Essential for normal erythropoiesis. Required for efficient nuclear envelope opening and enucleation during the late stages of erythroblast maturation. In Homo sapiens (Human), this protein is Nuclear envelope integral membrane protein 1 (NEMP1).